The following is a 346-amino-acid chain: Porin Omp2a (346 aa).

The N-terminal stretch at 1 to 22 is a signal peptide; sequence MNIKSLLLGSAAALVAASGAQA.

Belongs to the alphaproteobacteria porin family. Monomer.

Its subcellular location is the cell outer membrane. Its function is as follows. Forms passive diffusion pores that allow small molecular weight hydrophilic materials across the outer membrane. This Brucella ovis protein is Porin Omp2a (omp2a).